Reading from the N-terminus, the 120-residue chain is C-C motif chemokine 27 (120 aa).

Positions 1-25 (MMEGLSPASSLPLLLLLLSPAPEAA) are cleaved as a signal peptide. 2 cysteine pairs are disulfide-bonded: Cys-34-Cys-63 and Cys-35-Cys-78.

The protein belongs to the intercrine beta (chemokine CC) family. As to quaternary structure, monomer, dimer, and tetramer. Heparin avidly promotes oligomerization. Interacts with TNFAIP6 (via Link domain). In terms of tissue distribution, isoform 1 is predominantly expressed in placenta and weakly in skin. Isoform 2 is predominantly expressed in testes and brain, weakly in kidney and liver and even lower in heart and muscle. Low expression of both isoforms in other tissues.

The protein localises to the secreted. The protein resides in the nucleus. Chemotactic factor that attracts skin-associated memory T-lymphocytes. May play a role in mediating homing of lymphocytes to cutaneous sites. May play a role in cell migration during embryogenesis. Nuclear forms may facilitate cellular migration by inducing cytoskeletal relaxation. Binds to CCR10. The sequence is that of C-C motif chemokine 27 (Ccl27) from Mus musculus (Mouse).